The chain runs to 583 residues: Kelch-like protein 35 (583 aa).

In terms of domain architecture, BTB spans 41–119; it reads TDVVLRAGGR…VYGAGVRLRA (79 aa). The region spanning 146–248 is the BACK domain; that stretch reads LEGRLRAANS…LEHVRLPLLA (103 aa). Kelch repeat units follow at residues 301-350, 352-394, 395-441, 443-489, 490-531, and 533-579; these read VIVV…ALRN, VYVS…VVQG, QLFA…SCAG, LFVI…SLED, TIYV…VCDG, and VHIL…TIIQ.

The protein is Kelch-like protein 35 (KLHL35) of Homo sapiens (Human).